The chain runs to 177 residues: Glia associated membrane protein glam-1 (177 aa).

The next 3 helical transmembrane spans lie at 19–39, 42–62, and 76–96; these read PLVVGLAVFGAIRSFVQFWMS, FGMAGTHFCVLLLDLLLLFGA, and VTFACVLIAIIRFMIYPVVFA.

The protein localises to the membrane. The chain is Glia associated membrane protein glam-1 from Caenorhabditis elegans.